Consider the following 428-residue polypeptide: Light-independent protochlorophyllide reductase subunit N (428 aa).

Residues C31, C56, and C117 each contribute to the [4Fe-4S] cluster site.

It belongs to the BchN/ChlN family. Protochlorophyllide reductase is composed of three subunits; BchL, BchN and BchB. Forms a heterotetramer of two BchB and two BchN subunits. [4Fe-4S] cluster serves as cofactor.

The enzyme catalyses chlorophyllide a + oxidized 2[4Fe-4S]-[ferredoxin] + 2 ADP + 2 phosphate = protochlorophyllide a + reduced 2[4Fe-4S]-[ferredoxin] + 2 ATP + 2 H2O. Its pathway is porphyrin-containing compound metabolism; bacteriochlorophyll biosynthesis (light-independent). Its function is as follows. Component of the dark-operative protochlorophyllide reductase (DPOR) that uses Mg-ATP and reduced ferredoxin to reduce ring D of protochlorophyllide (Pchlide) to form chlorophyllide a (Chlide). This reaction is light-independent. The NB-protein (BchN-BchB) is the catalytic component of the complex. The sequence is that of Light-independent protochlorophyllide reductase subunit N from Rhodopseudomonas palustris (strain BisB18).